We begin with the raw amino-acid sequence, 249 residues long: Capsid protein (249 aa).

Positions 1–33 (MDTDGDNDVFGSGNDTRNNDDKKKEEMKQNISD) are disordered. Positions 17–28 (RNNDDKKKEEMK) are enriched in basic and acidic residues.

Belongs to the closteroviridae capsid protein family.

Its subcellular location is the virion. Functionally, capsid protein self-assembles to form filamentous capsids, about 650-850 nm in length. This is Capsid protein from Beta vulgaris (Sugar beet).